Here is a 256-residue protein sequence, read N- to C-terminus: Major prion protein (256 aa).

Residues 1–24 (MVKSHIGSWILVLFVAMWSDVGLC) form the signal peptide. Positions 25–233 (KKRPKPGGGW…ESQAYYQRGA (209 aa)) are interaction with GRB2, ERI3 and SYN1. Residues 28–110 (PKPGGGWNTG…QWNKPSKPKT (83 aa)) form a disordered region. A run of 5 repeats spans residues 54–62 (PQGGGGWGQ), 63–70 (PHGGGWGQ), 71–78 (PHGGGWGQ), 79–86 (PHGGGWGQ), and 87–95 (PHGGGGWGQ). The 5 X 8 AA tandem repeats of P-H-G-G-G-W-G-Q stretch occupies residues 54–95 (PQGGGGWGQPHGGGWGQPHGGGWGQPHGGGWGQPHGGGGWGQ). Over residues 55–97 (QGGGGWGQPHGGGWGQPHGGGWGQPHGGGWGQPHGGGGWGQGG) the composition is skewed to gly residues. Residues histidine 64, glycine 65, glycine 66, histidine 72, glycine 73, glycine 74, histidine 80, glycine 81, glycine 82, histidine 88, glycine 90, and glycine 91 each coordinate Cu(2+). Cysteines 182 and 217 form a disulfide. Residues asparagine 184 and asparagine 200 are each glycosylated (N-linked (GlcNAc...) asparagine). Alanine 233 carries the GPI-anchor amidated alanine lipid modification. The propeptide at 234-256 (SVILFSSPPVILLISFLIFLIVG) is removed in mature form.

It belongs to the prion family. Monomer and homodimer. Has a tendency to aggregate into amyloid fibrils containing a cross-beta spine, formed by a steric zipper of superposed beta-strands. Soluble oligomers may represent an intermediate stage on the path to fibril formation. Copper binding may promote oligomerization. Interacts with GRB2, APP, ERI3/PRNPIP and SYN1. Mislocalized cytosolically exposed PrP interacts with MGRN1; this interaction alters MGRN1 subcellular location and causes lysosomal enlargement. Interacts with KIAA1191.

Its subcellular location is the cell membrane. The protein localises to the golgi apparatus. Its function is as follows. Its primary physiological function is unclear. Has cytoprotective activity against internal or environmental stresses. May play a role in neuronal development and synaptic plasticity. May be required for neuronal myelin sheath maintenance. May play a role in iron uptake and iron homeostasis. Soluble oligomers are toxic to cultured neuroblastoma cells and induce apoptosis (in vitro). Association with GPC1 (via its heparan sulfate chains) targets PRNP to lipid rafts. Also provides Cu(2+) or Zn(2+) for the ascorbate-mediated GPC1 deaminase degradation of its heparan sulfate side chains. The polypeptide is Major prion protein (PRNP) (Budorcas taxicolor (Golden takin)).